The sequence spans 302 residues: Protein transport protein SEC13 homolog A (302 aa).

6 WD repeats span residues 9 to 48 (GHSD…GSQH), 54 to 95 (GHRG…QWTQ), 101 to 142 (DHKV…GWDT), 148 to 201 (AHPV…WKMD), 208 to 251 (KHTD…EQWE), and 257 to 296 (DFKT…EWEQ).

The protein belongs to the WD repeat SEC13 family. Interacts with MAG5, SEC31A and SEC31B.

Its subcellular location is the golgi apparatus. The protein localises to the endoplasmic reticulum. Its function is as follows. Required for protein transport from the endoplasmic reticulum to the Golgi apparatus. The polypeptide is Protein transport protein SEC13 homolog A (Arabidopsis thaliana (Mouse-ear cress)).